The primary structure comprises 632 residues: Cytoplasmic polyadenylation element-binding protein 3 (632 aa).

Basic and acidic residues predominate over residues 1–11 (MQDDLLMDKSK). Disordered stretches follow at residues 1 to 89 (MQDD…TGGS) and 127 to 212 (FSPQ…RRAV). Residues 13–48 (QQRQQPQQPPSSQTQQQQKEAASVAEPPSSRESSPP) show a composition bias toward low complexity. 2 stretches are compositionally biased toward polar residues: residues 65–89 (SFQQ…TGGS) and 135–169 (HQTQ…LTNK). Positions 170-193 (PSSSPNSSSPSPSNWNNQQNAAWN) are enriched in low complexity. RRM domains are found at residues 375–466 (RKVF…PWNL) and 483–565 (KTIF…PYVL).

The protein belongs to the RRM CPEB family. Following synaptic activity, forms amyloid-like oligomers. Aggregation requires an intact actin cytoskeleton. In embryos, expressed in the central nervous system, and intermediate and distal pronephric tubule segments of the embryonic kidney.

It is found in the cytoplasm. Its subcellular location is the nucleus. It localises to the synapse. The protein resides in the cell projection. The protein localises to the dendrite. It is found in the postsynaptic density. Its function is as follows. Sequence-specific RNA-binding protein which acts as a translational repressor in the basal unstimulated state but, following neuronal stimulation, acts as a translational activator. Does not bind to the cytoplasmic polyadenylation element (CPE), a uridine-rich sequence element within the mRNA 3'-UTR, but binds to a U-rich loop within a stem-loop structure. Required for the consolidation and maintenance of hippocampal-based long term memory. Inhibits differentiation of intermediate mesoderm from an early stage to inhibit pronephric differentiation but induce neural differentiation. This chain is Cytoplasmic polyadenylation element-binding protein 3 (cpeb3), found in Xenopus tropicalis (Western clawed frog).